Consider the following 217-residue polypeptide: MAARCVRLARRSLPALALSFRPSPRLLCTATKQKNNGQNLEEDLGHCEPKTDPSSADKTLLEEKVKLEEQLKETMEKYKRALADTENLRQRSQKLVEEAKLYGIQGFCKDLLEVADILEKATQSVPKEEVSNNNPHLKSLYEGLVMTEVQIQKVFTKHGLLRLDPIGAKFDPYEHEALFHTPVEGKEPGTVALVSKVGYKLHGRTLRPALVGVVKDA.

The transit peptide at 1 to 27 (MAARCVRLARRSLPALALSFRPSPRLL) directs the protein to the mitochondrion. Lys-94 carries the post-translational modification N6-acetyllysine; alternate. Lys-94 is subject to N6-succinyllysine; alternate. Residue Lys-100 is modified to N6-acetyllysine. Lys-120 bears the N6-succinyllysine mark. The residue at position 215 (Lys-215) is an N6-acetyllysine; alternate. The residue at position 215 (Lys-215) is an N6-succinyllysine; alternate.

It belongs to the GrpE family. As to quaternary structure, probable component of the PAM complex at least composed of a mitochondrial HSP70 protein, GRPEL1 or GRPEL2, TIMM44, TIMM16/PAM16 and TIMM14/DNAJC19. Binds to HSP70, HSC70 and HSJ1B. As to expression, ubiquitous. Particularly abundant in heart, kidney and liver.

Its subcellular location is the mitochondrion matrix. Essential component of the PAM complex, a complex required for the translocation of transit peptide-containing proteins from the inner membrane into the mitochondrial matrix in an ATP-dependent manner. Seems to control the nucleotide-dependent binding of mitochondrial HSP70 to substrate proteins. This chain is GrpE protein homolog 1, mitochondrial (Grpel1), found in Rattus norvegicus (Rat).